A 152-amino-acid polypeptide reads, in one-letter code: uncharacterized protein (152 aa).

Positions M1–A16 are cleaved as a signal peptide. Residues N20–Y135 form the Cytochrome c domain. The heme c site is built by C33, C36, and H37.

This is an uncharacterized protein from Aquifex aeolicus (strain VF5).